Reading from the N-terminus, the 427-residue chain is Trigger factor (427 aa).

In terms of domain architecture, PPIase FKBP-type spans 160–240 (TDTVIGDVVK…VKEVKRLELP (81 aa)).

The protein belongs to the FKBP-type PPIase family. Tig subfamily.

The protein resides in the cytoplasm. It carries out the reaction [protein]-peptidylproline (omega=180) = [protein]-peptidylproline (omega=0). In terms of biological role, involved in protein export. Acts as a chaperone by maintaining the newly synthesized protein in an open conformation. Functions as a peptidyl-prolyl cis-trans isomerase. The protein is Trigger factor of Chlorobium limicola (strain DSM 245 / NBRC 103803 / 6330).